Here is a 423-residue protein sequence, read N- to C-terminus: Histidine--tRNA ligase (423 aa).

Belongs to the class-II aminoacyl-tRNA synthetase family. In terms of assembly, homodimer.

The protein localises to the cytoplasm. It carries out the reaction tRNA(His) + L-histidine + ATP = L-histidyl-tRNA(His) + AMP + diphosphate + H(+). The polypeptide is Histidine--tRNA ligase (Halorhodospira halophila (strain DSM 244 / SL1) (Ectothiorhodospira halophila (strain DSM 244 / SL1))).